The chain runs to 576 residues: CDPK-related kinase 1 (576 aa).

The disordered stretch occupies residues 1–39 (MGICHGKPVEQQSKSLPVSGETNEAPTNSQPPAKSSGFP). G2 is lipidated: N-myristoyl glycine. Positions 10 to 33 (EQQSKSLPVSGETNEAPTNSQPPA) are enriched in polar residues. Residues 123–385 (YEIDGEVGRG…AAQALCHPWL (263 aa)) enclose the Protein kinase domain. ATP contacts are provided by residues 129-137 (VGRGHFGYT) and K155. The active-site Proton acceptor is D251. The residue at position 291 (S291) is a Phosphoserine. A Phosphoserine; by CPK1 and CPK34 modification is found at S333. The tract at residues 390–420 (ELKIPSDMIIYKLVKVYIMSTSLRKSALAAL) is autoinhibitory domain. Residues 409-429 (STSLRKSALAALAKTLTVPQL) form a calmodulin binding (CaMBD) region. EF-hand domains lie at 427–463 (PQLA…STDA), 464–499 (MKDS…VYQL), 500–539 (EAME…GPSV), and 542–571 (HVVL…VSSR). The Ca(2+) site is built by S442, N444, Y446, K483, E488, D519, N521, E528, D553, and K555. S557 bears the Phosphoserine mark.

This sequence belongs to the protein kinase superfamily. Ser/Thr protein kinase family. CDPK subfamily. As to quaternary structure, binds calmodulin (CaM) in a calcium-dependent manner. Interacts with HSFA1A. In terms of processing, autophosphorylated.

Its subcellular location is the membrane. The catalysed reaction is L-seryl-[protein] + ATP = O-phospho-L-seryl-[protein] + ADP + H(+). It carries out the reaction L-threonyl-[protein] + ATP = O-phospho-L-threonyl-[protein] + ADP + H(+). Its activity is regulated as follows. Activated by calcium and calmodulin. Autophosphorylation may play an important role in the regulation of the kinase activity. Functionally, may play a role in signal transduction pathways that involve calcium as a second messenger. Serine/threonine kinase that phosphorylates histone H3. Confers thermotolerance; involved in the heat-shock-mediated calmodulin-dependent signal transduction leading to the activation of heat-shock transcription factors (HSFs); phosphorylates HSFA1A. This is CDPK-related kinase 1 (CRK1) from Arabidopsis thaliana (Mouse-ear cress).